A 536-amino-acid chain; its full sequence is Protoporphyrinogen oxidase, chloroplastic (536 aa).

The N-terminal 36 residues, 1–36, are a transit peptide targeting the chloroplast; the sequence is MAAAAAAMATATSATAAPPLRIRDAARRTRRRGHVR. FAD-binding positions include 62–67, 87–88, and 111–114; these read GGGISG, EA, and GPNS. The disordered stretch occupies residues 248–272; it reads TIKTIQERGKNPKPPRDPRLPTPKG. The segment covering 252-266 has biased composition (basic and acidic residues); it reads IQERGKNPKPPRDPR. An FAD-binding site is contributed by 510–512; sequence VAL.

Belongs to the protoporphyrinogen/coproporphyrinogen oxidase family. Protoporphyrinogen oxidase subfamily. Requires FAD as cofactor.

The protein localises to the plastid. Its subcellular location is the chloroplast. It carries out the reaction protoporphyrinogen IX + 3 O2 = protoporphyrin IX + 3 H2O2. The protein operates within porphyrin-containing compound metabolism; protoporphyrin-IX biosynthesis; protoporphyrin-IX from protoporphyrinogen-IX: step 1/1. Its pathway is porphyrin-containing compound metabolism; chlorophyll biosynthesis. Its function is as follows. Catalyzes the 6-electron oxidation of protoporphyrinogen-IX to form protoporphyrin-IX. This chain is Protoporphyrinogen oxidase, chloroplastic (PPOX1), found in Oryza sativa subsp. japonica (Rice).